We begin with the raw amino-acid sequence, 303 residues long: Pycsar effector protein BcPycTIR (303 aa).

An a nucleoside 3',5'-cyclic phosphate-binding site is contributed by K22–R138. Residues R154 to Y273 form a TIR-like region.

Purified protein forms large 2-dimensional sheets when incubated with cUMP and shorter filaments in the presence of cCMP.

Its subcellular location is the cytoplasm. The catalysed reaction is NAD(+) + H2O = ADP-D-ribose + nicotinamide + H(+). Activated by cyclic UMP (cUMP) and to a lesser extent by cCMP. Pycsar (pyrimidine cyclase system for antiphage resistance) provides immunity against bacteriophage. The pyrimidine cyclase (PycC) synthesizes cyclic nucleotides in response to infection; these serve as specific second messenger signals. The signals activate the adjacent effector, leading to bacterial cell death and abortive phage infection. A clade B Pycsar system. Its function is as follows. The effector protein of a two-gene Pycsar system. Upon activation by cyclic UMP (cUMP) degrades cellular NAD(+). Expression of this and adjacent uridylate cyclase BcPycC (AC A0A0J5ZXG5) probably confers resistance to bacteriophage. The genes are probably only expressed in response to bacteriophage infection. This protein probably only responds to cUMP (produced by its cognate NTP cyclase). The protein is Pycsar effector protein BcPycTIR of Burkholderia cepacia (Pseudomonas cepacia).